A 328-amino-acid polypeptide reads, in one-letter code: Phosphate acyltransferase (328 aa).

It belongs to the PlsX family. In terms of assembly, homodimer. Probably interacts with PlsY.

The protein resides in the cytoplasm. The enzyme catalyses a fatty acyl-[ACP] + phosphate = an acyl phosphate + holo-[ACP]. It functions in the pathway lipid metabolism; phospholipid metabolism. Its function is as follows. Catalyzes the reversible formation of acyl-phosphate (acyl-PO(4)) from acyl-[acyl-carrier-protein] (acyl-ACP). This enzyme utilizes acyl-ACP as fatty acyl donor, but not acyl-CoA. The sequence is that of Phosphate acyltransferase from Campylobacter jejuni subsp. jejuni serotype O:2 (strain ATCC 700819 / NCTC 11168).